The following is a 255-amino-acid chain: Acetylglutamate kinase (255 aa).

Substrate contacts are provided by residues 40–41 (GG), Arg-62, and Asn-153.

This sequence belongs to the acetylglutamate kinase family. ArgB subfamily.

Its subcellular location is the cytoplasm. The catalysed reaction is N-acetyl-L-glutamate + ATP = N-acetyl-L-glutamyl 5-phosphate + ADP. Its pathway is amino-acid biosynthesis; L-arginine biosynthesis; N(2)-acetyl-L-ornithine from L-glutamate: step 2/4. In terms of biological role, catalyzes the ATP-dependent phosphorylation of N-acetyl-L-glutamate. The polypeptide is Acetylglutamate kinase (Bacillus cereus (strain B4264)).